Reading from the N-terminus, the 292-residue chain is MPWLQLRINVTPEQAPAVESAALAAGAQAVTLEDNADQPIFEPALGETPLWSDTRITALFEADISTDETWQKVQNHYGEELPHHHWHVLEDKDWEREWIKNYHPIQCGPHFWICPSWLSPPDPNAINLLLDPGLAFGTGTHPTTFMCLEWLAQQDVKNLELIDYGCGSGILGIAGLLMGANSAVGVDIDPQALLATQENAVRNGLAKEAFPVFMPQRAPKEPVDMVLANILAGPLVELAPALIALVKSGGKICLSGVLGTQRTSIISAYEHAIEFTEVREKDEWICLAGIKK.

4 residues coordinate S-adenosyl-L-methionine: Thr144, Gly165, Asp187, and Asn229.

It belongs to the methyltransferase superfamily. PrmA family.

The protein resides in the cytoplasm. It carries out the reaction L-lysyl-[protein] + 3 S-adenosyl-L-methionine = N(6),N(6),N(6)-trimethyl-L-lysyl-[protein] + 3 S-adenosyl-L-homocysteine + 3 H(+). Functionally, methylates ribosomal protein L11. This is Ribosomal protein L11 methyltransferase from Saccharophagus degradans (strain 2-40 / ATCC 43961 / DSM 17024).